Here is a 179-residue protein sequence, read N- to C-terminus: ATP synthase subunit delta (179 aa).

It belongs to the ATPase delta chain family. As to quaternary structure, F-type ATPases have 2 components, F(1) - the catalytic core - and F(0) - the membrane proton channel. F(1) has five subunits: alpha(3), beta(3), gamma(1), delta(1), epsilon(1). F(0) has three main subunits: a(1), b(2) and c(10-14). The alpha and beta chains form an alternating ring which encloses part of the gamma chain. F(1) is attached to F(0) by a central stalk formed by the gamma and epsilon chains, while a peripheral stalk is formed by the delta and b chains.

The protein resides in the cell membrane. Its function is as follows. F(1)F(0) ATP synthase produces ATP from ADP in the presence of a proton or sodium gradient. F-type ATPases consist of two structural domains, F(1) containing the extramembraneous catalytic core and F(0) containing the membrane proton channel, linked together by a central stalk and a peripheral stalk. During catalysis, ATP synthesis in the catalytic domain of F(1) is coupled via a rotary mechanism of the central stalk subunits to proton translocation. Functionally, this protein is part of the stalk that links CF(0) to CF(1). It either transmits conformational changes from CF(0) to CF(1) or is implicated in proton conduction. This chain is ATP synthase subunit delta, found in Clostridium botulinum (strain 657 / Type Ba4).